Consider the following 1253-residue polypeptide: Myosin-1 (1253 aa).

The segment at 1-40 (MGHSRRPVGGEKKSRGFGRSKAAADVGDGRQAGKPQVKKA) is disordered. One can recognise a Myosin motor domain in the interval 50-729 (IGVSDLTLLS…TLFALEAMRD (680 aa)). 143-150 (GESGAGKT) contacts ATP. Ser371 carries the post-translational modification Phosphoserine. The interval 418-500 (SIGILDIYGF…PGVFAALNDA (83 aa)) is actin-binding. IQ domains follow at residues 733–753 (HNMAIRIQRAWRNYLRYRIEC) and 754–779 (ATRIQRFWRRTTGGLEFIKLRDQGHQ). The region spanning 787-977 (RRRMSLLGSR…TIHTGAGEPA (191 aa)) is the TH1 domain. 2 disordered regions span residues 959 to 1083 (TGDD…PKKP) and 1139 to 1253 (QVAP…DDDW). The segment covering 1029–1055 (PQPAAAQPAAPQPAARVVPQPVAAVAA) has biased composition (low complexity). Pro residues-rich tracts occupy residues 1068-1081 (APPPPPPAAAPAPK) and 1143-1155 (APKPTPPPPPPAA). Residues 1080–1141 (PKKPTAKALY…PEAYLEEQVA (62 aa)) enclose the SH3 domain. Low complexity-rich tracts occupy residues 1156–1173 (PRSTPTPVNGAAAAAKAK) and 1221–1235 (NSASNASLAGGLAEA).

This sequence belongs to the TRAFAC class myosin-kinesin ATPase superfamily. Myosin family. Phosphorylation of the TEDS site (Ser-371) is required for the polarization of the actin cytoskeleton. Phosphorylation probably activates the myosin-I ATPase activity.

The protein localises to the cytoplasm. It is found in the cytoskeleton. Its subcellular location is the actin patch. Type-I myosin implicated in the organization of the actin cytoskeleton. Required for proper actin cytoskeleton polarization. At the cell cortex, assembles in patch-like structures together with proteins from the actin-polymerizing machinery and promotes actin assembly. Functions as actin nucleation-promoting factor (NPF) for the Arp2/3 complex. Plays an important role in polarized growth, spore germination, hyphal morphogenesis, and septal wall formation. The polypeptide is Myosin-1 (myoA) (Aspergillus clavatus (strain ATCC 1007 / CBS 513.65 / DSM 816 / NCTC 3887 / NRRL 1 / QM 1276 / 107)).